Consider the following 1158-residue polypeptide: Voltage-gated inwardly rectifying potassium channel KCNH2 (1158 aa).

Residues 1–402 (MPVRRGHVAP…RIHRWTILHY (402 aa)) lie on the Cytoplasmic side of the membrane. Residues 17–88 (TIIRKFEGQS…AAQIAQALLG (72 aa)) form the PAS domain. Positions 92 to 144 (RKVEIAFYRKDGSCFLCLVDVVPVKNEDGAVIMFILNFEVVMEKDMVGSPTHD) constitute a PAC domain. The interval 232-314 (RALVGSSSPP…GAMHPLRGGL (83 aa)) is disordered. Ser239 carries the phosphoserine modification. Residues 258–269 (PDASGSSCSLAR) show a composition bias toward polar residues. Residues Ser283, Ser284, Ser319, and Ser350 each carry the phosphoserine modification. Residues 403–423 (SPFKAVWDWLILLLVIYTAVF) form a helical membrane-spanning segment. The Extracellular portion of the chain corresponds to 424–449 (TPYSAAFLLKETEEGPPAPDCGYACQ). The chain crosses the membrane as a helical span at residues 450-470 (PLAVVDFIVDIMFIVDILINF). Topologically, residues 471–494 (RTTYVNANEEVVSHPGRIAVHYFK) are cytoplasmic. Residues 495-515 (GWFLIDMVAAIPFDLLIFGSG) form a helical membrane-spanning segment. Residues 516–519 (SEEL) are Extracellular-facing. A helical; Voltage-sensor transmembrane segment spans residues 520-540 (IGLLKTARLLRLVRVARKLDR). Topologically, residues 541 to 546 (YSEYGA) are cytoplasmic. The chain crosses the membrane as a helical span at residues 547 to 567 (AVLFLLMCTFALIAHWLACIW). Residues 568 to 610 (YAIGNMEQPHMDSRIGWLHNLGDQIGKPYNSSGLGGPSIKDKY) lie on the Extracellular side of the membrane. An N-linked (GlcNAc...) asparagine glycan is attached at Asn597. The pore-forming intramembrane region spans 611–631 (VTALYFTFSSLTSVGFGNVSP). The short motif at 623-628 (SVGFGN) is the Selectivity filter element. At 632–637 (NTNSEK) the chain is on the extracellular side. Residues 638–658 (IFSICVMLIGSLMYASIFGNV) traverse the membrane as a helical segment. Over 659 to 1158 (SAIIQRLYSG…LHRHGSDPGS (500 aa)) the chain is Cytoplasmic. The tract at residues 741–841 (PFRGATKGCL…IHRDDLLEVL (101 aa)) is cNMP-binding domain. Residues 869–987 (GSPGSAELEG…KSSDTCNPLS (119 aa)) are disordered. A phosphoserine mark is found at Ser870 and Ser873. The segment covering 882–891 (RQRKRKLSFR) has biased composition (basic residues). The segment covering 910 to 926 (GRAGAGPSGRGRPGGPW) has biased composition (gly residues). The segment covering 927 to 938 (GESPSSGPSSPE) has biased composition (low complexity). Positions 959–969 (SPRPPGEPPGG) are enriched in pro residues. Arg1013 is modified (omega-N-methylarginine). Residues 1034–1061 (RGDVEGRLDALQRQLNRLETRLSADMAT) adopt a coiled-coil conformation. The tract at residues 1116 to 1158 (FEELPPGAPELPQDGPPRRLSLPGQLGALTSQPLHRHGSDPGS) is disordered. The residue at position 1136 (Ser1136) is a Phosphoserine.

This sequence belongs to the potassium channel family. H (Eag) (TC 1.A.1.20) subfamily. Kv11.1/KCNH2 sub-subfamily. As to quaternary structure, the potassium channel is probably composed of a homo- or heterotetrameric complex of pore-forming alpha subunits that can associate with modulating beta subunits. Interacts with DNAJB12 and DNAJB14; chaperones DNAJB12 and DNAJB14 promote tetramerization. Heteromultimer with KCNH6/ERG2 and KCNH7/ERG3. Interacts with ALG10B. Forms a stable complex with KCNE1 or KCNE2, and that this heteromultimerization regulates Inward rectifier potassium channel activity. Interacts with CANX. The core-glycosylated, but not the fully glycosylated form interacts with RNF207. Interacts with NDFIP1 and NDFIP2; this interaction decreases the cell membrane expression by targeting KCNH2, through interaction with NEDD4L, for the degradation through the multivesicular bodies (MVBs)-lysosomal pathway. Phosphorylated on serine and threonine residues. Phosphorylation by PKA inhibits ion conduction. In terms of tissue distribution, highly expressed in left and right atria of the heart, in cortex and hippocampus; detected at intermediate levels in left and right ventricle, Purkinje fibers, cerebellum, thalamus and basal ganglia; detected at low levels in liver, spleen and kidney.

The protein resides in the cell membrane. The enzyme catalyses K(+)(in) = K(+)(out). In terms of biological role, pore-forming (alpha) subunit of voltage-gated inwardly rectifying potassium channel. Characterized by unusual gating kinetics by producing relatively small outward currents during membrane depolarization and large inward currents during subsequent repolarization which reflect a rapid inactivation during depolarization and quick recovery from inactivation but slow deactivation (closing) during repolarization. Channel properties are modulated by cAMP and subunit assembly. Forms a stable complex with KCNE1 or KCNE2, and that this heteromultimerization regulates inward rectifier potassium channel activity. This Canis lupus familiaris (Dog) protein is Voltage-gated inwardly rectifying potassium channel KCNH2.